We begin with the raw amino-acid sequence, 355 residues long: 3-isopropylmalate dehydrogenase (355 aa).

Substrate is bound by residues R90, R100, R128, and D222. Mg(2+)-binding residues include D222, D246, and D250. Residue 280 to 292 coordinates NAD(+); that stretch reads GSAPDIAGKGIAN.

The protein belongs to the isocitrate and isopropylmalate dehydrogenases family. LeuB type 1 subfamily. Homodimer. It depends on Mg(2+) as a cofactor. Mn(2+) serves as cofactor.

Its subcellular location is the cytoplasm. The catalysed reaction is (2R,3S)-3-isopropylmalate + NAD(+) = 4-methyl-2-oxopentanoate + CO2 + NADH. The protein operates within amino-acid biosynthesis; L-leucine biosynthesis; L-leucine from 3-methyl-2-oxobutanoate: step 3/4. In terms of biological role, catalyzes the oxidation of 3-carboxy-2-hydroxy-4-methylpentanoate (3-isopropylmalate) to 3-carboxy-4-methyl-2-oxopentanoate. The product decarboxylates to 4-methyl-2 oxopentanoate. The protein is 3-isopropylmalate dehydrogenase of Burkholderia lata (strain ATCC 17760 / DSM 23089 / LMG 22485 / NCIMB 9086 / R18194 / 383).